The primary structure comprises 238 residues: Thrombin-like enzyme collinein-1 (238 aa).

A Peptidase S1 domain is found at 1–229 (VIGGDECNIN…HLDWIQNIIA (229 aa)). Disulfide bonds link C7–C141, C28–C44, C78–C236, C120–C190, C152–C169, and C180–C205. Catalysis depends on charge relay system residues H43 and D88. The active-site Charge relay system is S184.

Belongs to the peptidase S1 family. Snake venom subfamily. As to quaternary structure, monomer. As to expression, expressed by the venom gland.

Its subcellular location is the secreted. With respect to regulation, inhibited by Cu(2+) and, to a lesser extent, by Zn(2+) and Ba(2+). Not inhibited by Ca(2+) and Mg(2+). Thrombin-like snake venom serine protease. Releases fibrinopeptide A and B in the conversion of fibrinogen to fibrin, with preferential activity on the alpha chain of fibrinogen. Also hydrolyzes N-p-toluensulfonyl arginine ester (TAME) and chromogenic artificial substrates of the blood coagulation cascade: S-2222 for factor Xa, S-2302 for kallikrein and S-2238 for thrombin. When tested in vitro, the recombinant protein does not degrade blood clots, suggesting that this toxin lacks fibrinolytic activity. In addition, it moderately inhibits human Kv10.1/KCNH1/EAG1 currents, with a mechanism independent of its enzymatic activity. It selectively blocks Kv10.1/KCNH1/EAG1 in a time and dose-dependent manner (IC(50)=4.2 uM for native protein and IC(50)=2.5 uM for recombinant protein). It may have a preference in interacting with Kv10.1/KCNH1/EAG1 in its closed state, since the inhibitory effect of the toxin is decreased at more depolarized potentials. Corroboratively, it may have possible antitumor applications, since it reduces the viability of human breast cancer cell line MCF-7, which strongly expresses Kv10.1/KCNH1/EAG1, but does not affect the liver carcinoma and the non-tumorigenic epithelial breast cell lines, which weakly express Kv10.1/KCNH1/EAG1. When tested on peripheral blood mononuclear cells (PBMC), the native protein shows mild cytotoxicity, whereas the recombinant protein does not show any cytotoxicity. Native form is not immununogenic, since it does not induce statistically significant antibody production in mice, whereas recombinant form shows an antibody titer slightly higher than the native form. In vivo, subplantar injection in mice paw induces a discreet paw edema. In addition, intraperitoneal injection of the recombinant protein into mice led to fibrinogen depletion, resulting in the blood incoagulability. This is Thrombin-like enzyme collinein-1 from Crotalus durissus collilineatus (Brazilian rattlesnake).